A 610-amino-acid polypeptide reads, in one-letter code: UvrABC system protein C (610 aa).

Residues 16-94 (SQPGVYRMYD…IKLYQPRYNV (79 aa)) enclose the GIY-YIG domain. One can recognise a UVR domain in the interval 204–239 (DQVLTQLIARMEKASQDLAFEEAARIRDQIQAVRRV).

It belongs to the UvrC family. In terms of assembly, interacts with UvrB in an incision complex.

It localises to the cytoplasm. The UvrABC repair system catalyzes the recognition and processing of DNA lesions. UvrC both incises the 5' and 3' sides of the lesion. The N-terminal half is responsible for the 3' incision and the C-terminal half is responsible for the 5' incision. This chain is UvrABC system protein C, found in Salmonella typhi.